A 366-amino-acid chain; its full sequence is MVSQRSLLLLLLLTLRDVDSCQGPELVRELVLAKVKALFLDALGPPAMDGEGGDPGIRRLPRRHAVGGFMHRTSEPEEEDVSQAILFPATGATCEDQPAARGLAQEAEEGLFTYVFRPSQHIRSHQVTSAQLWFHTGLGRKSTAAANSSAPLLDLLVLSSGGPMAVPVSLGQGPPRWAVLHLAASAFPLLTHPILVLLLRCPLCSCSGRPETTPFLVAHTRARAPSAGERARRSTPSVPWPWSPAALRLLQRPPEEPAAHAFCHRAALNISFQELGWDRWIVHPPSFIFHYCHGSCGMPTSDLPLPVPGVPPTPVQPLFLVPGAKPCCAALPGSMRSLRVRTTSDGGYSFKYEMVPNLITQHCACI.

The signal sequence occupies residues 1-20 (MVSQRSLLLLLLLTLRDVDS). The propeptide occupies 21–63 (CQGPELVRELVLAKVKALFLDALGPPAMDGEGGDPGIRRLPRR). A propeptide spans 64–233 (HAVGGFMHRT…APSAGERARR (170 aa)) (inhibin alpha N-terminal region). N-linked (GlcNAc...) asparagine glycans are attached at residues N147 and N269. 3 disulfide bridges follow: C263-C328, C292-C363, and C296-C365.

The protein belongs to the TGF-beta family. Dimeric, linked by one or more disulfide bonds. Activin B is a dimer of alpha and beta-B. Inhibin A is a dimer of alpha and beta-A. Inhibin B is a dimer of alpha and beta-B. Interacts with TGFBR3L; this interaction regulates female fertility. In terms of processing, proteolytic processing yields a number of bioactive forms, consisting either solely of the mature alpha chain, of the most N-terminal propeptide linked through a disulfide bond to the mature alpha chain, or of the entire proprotein.

It localises to the secreted. Functionally, inhibins and activins inhibit and activate, respectively, the secretion of follitropin by the pituitary gland. Inhibins/activins are involved in regulating a number of diverse functions such as hypothalamic and pituitary hormone secretion, gonadal hormone secretion, germ cell development and maturation, erythroid differentiation, insulin secretion, nerve cell survival, embryonic axial development or bone growth, depending on their subunit composition. Inhibins appear to oppose the functions of activins. In terms of biological role, inhibin A is a dimer of alpha/INHA and beta-A/INHBA that functions as a feedback regulator in the hypothalamic-pituitary-gonadal (HPG) axis. Inhibits the secretion of FSH from the anterior pituitary gland by acting on pituitary gonadotrope cells. Antagonizes activin A by binding to the proteoglycan, betaglycan, and forming a stable complex with and, thereby, sequestering type II activin receptors while excluding type I receptor. Inhibin B is a dimer of alpha and beta-B that plays a crucial role in the regulation of the reproductive system by inhibiting the secretion of follicle-stimulating hormone (FSH) from the anterior pituitary gland. Thereby, maintains reproductive homeostasis in both males and females. Acts as a more potent suppressor of FSH release than inhibin A. Functions as competitive receptor antagonist binding activin type II receptors with high affinity in the presence of the TGF-beta type III coreceptor/TGFBR3L. This chain is Inhibin alpha chain (Inha), found in Mus musculus (Mouse).